A 248-amino-acid chain; its full sequence is 1-(5-phosphoribosyl)-5-[(5-phosphoribosylamino)methylideneamino] imidazole-4-carboxamide isomerase (248 aa).

Residue Asp11 is the Proton acceptor of the active site. The active-site Proton donor is the Asp132.

This sequence belongs to the HisA/HisF family.

It localises to the cytoplasm. It carries out the reaction 1-(5-phospho-beta-D-ribosyl)-5-[(5-phospho-beta-D-ribosylamino)methylideneamino]imidazole-4-carboxamide = 5-[(5-phospho-1-deoxy-D-ribulos-1-ylimino)methylamino]-1-(5-phospho-beta-D-ribosyl)imidazole-4-carboxamide. It participates in amino-acid biosynthesis; L-histidine biosynthesis; L-histidine from 5-phospho-alpha-D-ribose 1-diphosphate: step 4/9. This Afipia carboxidovorans (strain ATCC 49405 / DSM 1227 / KCTC 32145 / OM5) (Oligotropha carboxidovorans) protein is 1-(5-phosphoribosyl)-5-[(5-phosphoribosylamino)methylideneamino] imidazole-4-carboxamide isomerase.